The chain runs to 315 residues: Transaldolase (315 aa).

Lys-131 acts as the Schiff-base intermediate with substrate in catalysis.

The protein belongs to the transaldolase family. Type 1 subfamily. In terms of assembly, homodimer.

Its subcellular location is the cytoplasm. It carries out the reaction D-sedoheptulose 7-phosphate + D-glyceraldehyde 3-phosphate = D-erythrose 4-phosphate + beta-D-fructose 6-phosphate. The protein operates within carbohydrate degradation; pentose phosphate pathway; D-glyceraldehyde 3-phosphate and beta-D-fructose 6-phosphate from D-ribose 5-phosphate and D-xylulose 5-phosphate (non-oxidative stage): step 2/3. Its function is as follows. Transaldolase is important for the balance of metabolites in the pentose-phosphate pathway. The sequence is that of Transaldolase from Actinobacillus pleuropneumoniae serotype 5b (strain L20).